Reading from the N-terminus, the 259-residue chain is Imidazole glycerol phosphate synthase subunit HisF (259 aa).

Catalysis depends on residues Asp-11 and Asp-130.

Belongs to the HisA/HisF family. As to quaternary structure, heterodimer of HisH and HisF.

The protein resides in the cytoplasm. It carries out the reaction 5-[(5-phospho-1-deoxy-D-ribulos-1-ylimino)methylamino]-1-(5-phospho-beta-D-ribosyl)imidazole-4-carboxamide + L-glutamine = D-erythro-1-(imidazol-4-yl)glycerol 3-phosphate + 5-amino-1-(5-phospho-beta-D-ribosyl)imidazole-4-carboxamide + L-glutamate + H(+). It functions in the pathway amino-acid biosynthesis; L-histidine biosynthesis; L-histidine from 5-phospho-alpha-D-ribose 1-diphosphate: step 5/9. IGPS catalyzes the conversion of PRFAR and glutamine to IGP, AICAR and glutamate. The HisF subunit catalyzes the cyclization activity that produces IGP and AICAR from PRFAR using the ammonia provided by the HisH subunit. The sequence is that of Imidazole glycerol phosphate synthase subunit HisF from Chloroflexus aurantiacus (strain ATCC 29366 / DSM 635 / J-10-fl).